The following is a 338-amino-acid chain: Aspartate carbamoyltransferase catalytic subunit (338 aa).

Carbamoyl phosphate is bound by residues Arg-72 and Thr-73. Residue Lys-100 coordinates L-aspartate. 3 residues coordinate carbamoyl phosphate: Arg-122, His-152, and Gln-155. Positions 186 and 243 each coordinate L-aspartate. 2 residues coordinate carbamoyl phosphate: Gly-284 and Pro-285.

Belongs to the aspartate/ornithine carbamoyltransferase superfamily. ATCase family. Heterododecamer (2C3:3R2) of six catalytic PyrB chains organized as two trimers (C3), and six regulatory PyrI chains organized as three dimers (R2).

It carries out the reaction carbamoyl phosphate + L-aspartate = N-carbamoyl-L-aspartate + phosphate + H(+). The protein operates within pyrimidine metabolism; UMP biosynthesis via de novo pathway; (S)-dihydroorotate from bicarbonate: step 2/3. Catalyzes the condensation of carbamoyl phosphate and aspartate to form carbamoyl aspartate and inorganic phosphate, the committed step in the de novo pyrimidine nucleotide biosynthesis pathway. This is Aspartate carbamoyltransferase catalytic subunit from Acinetobacter baylyi (strain ATCC 33305 / BD413 / ADP1).